The following is a 517-amino-acid chain: Tyrosine 3-monooxygenase (517 aa).

Ser33 is subject to Phosphoserine; by PKA. Positions 345, 350, and 390 each coordinate Fe cation.

Belongs to the biopterin-dependent aromatic amino acid hydroxylase family. It depends on Fe(2+) as a cofactor.

Its subcellular location is the cytoplasm. It is found in the perinuclear region. The protein localises to the cell projection. The protein resides in the axon. It carries out the reaction (6R)-L-erythro-5,6,7,8-tetrahydrobiopterin + L-tyrosine + O2 = (4aS,6R)-4a-hydroxy-L-erythro-5,6,7,8-tetrahydrobiopterin + L-dopa. The protein operates within catecholamine biosynthesis; dopamine biosynthesis; dopamine from L-tyrosine: step 1/2. Its activity is regulated as follows. Phosphorylation leads to an increase in the catalytic activity. Involved in the synthesis of catecholamines, such as dopamine. Has a role in serotonin signaling. Required for normal explorative and foraging behavior. This Caenorhabditis briggsae protein is Tyrosine 3-monooxygenase (cat-2).